The chain runs to 342 residues: Nucleoid-associated protein Sfri_2491 (342 aa).

The protein belongs to the YejK family.

The protein localises to the cytoplasm. The protein resides in the nucleoid. This is Nucleoid-associated protein Sfri_2491 from Shewanella frigidimarina (strain NCIMB 400).